A 696-amino-acid polypeptide reads, in one-letter code: Glycine--tRNA ligase beta subunit (696 aa).

The protein belongs to the class-II aminoacyl-tRNA synthetase family. Tetramer of two alpha and two beta subunits.

It is found in the cytoplasm. It catalyses the reaction tRNA(Gly) + glycine + ATP = glycyl-tRNA(Gly) + AMP + diphosphate. This is Glycine--tRNA ligase beta subunit from Nitratidesulfovibrio vulgaris (strain ATCC 29579 / DSM 644 / CCUG 34227 / NCIMB 8303 / VKM B-1760 / Hildenborough) (Desulfovibrio vulgaris).